Consider the following 427-residue polypeptide: MSFRDLRNFTEMMRALGYPRLISMENFRSPNFPLVAEILIWLVKRYEPQMEIPSDVDTESDRVFFIKAVAQFMATKAHVKLNLKRLYQADGYAVKEMLKITSILYNAMKTKENAGGDQNNDENSKFKFDLGSKIADLKLARQLGSEITAKGAALFDLLGQEEDLRESRTAAIARPLEITETERAMRAAVKDVTESIQMTKDLLNNVSSDEASLEAKIEKKKQDLERNQKRLQTLQSVRPAFMDEYEKIEEDLEKQYQTYVEKYRNLSFLEQQLDDYHRVEQERFEEAEMAMKMRQNKLKEEEKRLMRSGVARDEDSDVDIPEDEGSDSDIDDGQQARPHHPRHTQISGRGGARFIGSMRGGDSEETEDSEIDVDDDDEDDDEDGEEDEEENEDLDEDNDSLEGSSGKPGRTNQSLHPQILEESDNDF.

A coiled-coil region spans residues 202–307; sequence LLNNVSSDEA…LKEEEKRLMR (106 aa). Residues 300–313 are compositionally biased toward basic and acidic residues; it reads EEEKRLMRSGVARD. The interval 300–427 is disordered; it reads EEEKRLMRSG…QILEESDNDF (128 aa). 2 stretches are compositionally biased toward acidic residues: residues 314-332 and 363-400; these read EDSD…DIDD and SEET…DNDS.

The protein belongs to the CLUAP1 family.

Its subcellular location is the nucleus. It localises to the cell projection. The protein localises to the cilium. Functionally, required for cilia biogenesis and maintenance in the kidney, the lateral line organ and eye. Appears to function within the multiple intraflagellar transport complex B (IFT-B). This chain is Clusterin-associated protein 1 homolog (cluap1), found in Danio rerio (Zebrafish).